The following is a 601-amino-acid chain: Protein CT_858 (601 aa).

The protein belongs to the chlamydial CPn_1016/CT_858/TC_0248 family.

In Chlamydia trachomatis serovar D (strain ATCC VR-885 / DSM 19411 / UW-3/Cx), this protein is Protein CT_858.